The sequence spans 274 residues: 2,3,4,5-tetrahydropyridine-2,6-dicarboxylate N-succinyltransferase (274 aa).

2 residues coordinate substrate: Arg-103 and Asp-140.

Belongs to the transferase hexapeptide repeat family. In terms of assembly, homotrimer.

The protein resides in the cytoplasm. It carries out the reaction (S)-2,3,4,5-tetrahydrodipicolinate + succinyl-CoA + H2O = (S)-2-succinylamino-6-oxoheptanedioate + CoA. The protein operates within amino-acid biosynthesis; L-lysine biosynthesis via DAP pathway; LL-2,6-diaminopimelate from (S)-tetrahydrodipicolinate (succinylase route): step 1/3. The sequence is that of 2,3,4,5-tetrahydropyridine-2,6-dicarboxylate N-succinyltransferase from Haemophilus ducreyi (strain 35000HP / ATCC 700724).